The following is a 452-amino-acid chain: L-seryl-tRNA(Sec) selenium transferase (452 aa).

Lysine 285 is modified (N6-(pyridoxal phosphate)lysine).

It belongs to the SelA family. Pyridoxal 5'-phosphate is required as a cofactor.

It localises to the cytoplasm. The catalysed reaction is L-seryl-tRNA(Sec) + selenophosphate + H(+) = L-selenocysteinyl-tRNA(Sec) + phosphate. It participates in aminoacyl-tRNA biosynthesis; selenocysteinyl-tRNA(Sec) biosynthesis; selenocysteinyl-tRNA(Sec) from L-seryl-tRNA(Sec) (bacterial route): step 1/1. In terms of biological role, converts seryl-tRNA(Sec) to selenocysteinyl-tRNA(Sec) required for selenoprotein biosynthesis. The polypeptide is L-seryl-tRNA(Sec) selenium transferase (Aquifex aeolicus (strain VF5)).